Here is a 505-residue protein sequence, read N- to C-terminus: Tyrosine-protein kinase isoform SRK1 (505 aa).

Polar residues-rich tracts occupy residues 1 to 10 and 18 to 31; these read MGSCCSSQDG and AGST…SQSV. The interval 1–53 is disordered; the sequence is MGSCCSSQDGDGNGKATAGSTVDSHELSQSVKGKIKQPEPKPKPPPQVPPAQD. The SH3 domain occupies 54-116; that stretch reads VKYPIYVGKY…PSNYVAEYKS (63 aa). In terms of domain architecture, SH2 spans 122–214; sequence WFLGKIKRVE…GLCCKLLYPC (93 aa). A Protein kinase domain is found at 240-493; that stretch reads IKLLRRLGAG…TLQWQLEEFF (254 aa). Residues 246 to 254 and Lys-268 contribute to the ATP site; that span reads LGAGQFGEV. Catalysis depends on Asp-359, which acts as the Proton acceptor.

It belongs to the protein kinase superfamily. Tyr protein kinase family. SRC subfamily.

It localises to the cytoplasm. It carries out the reaction L-tyrosyl-[protein] + ATP = O-phospho-L-tyrosyl-[protein] + ADP + H(+). This Spongilla lacustris (Freshwater sponge) protein is Tyrosine-protein kinase isoform SRK1 (SRK1).